The sequence spans 244 residues: Serine-rich single-pass membrane protein 1 (244 aa).

The helical transmembrane segment at 35 to 55 (CGTIGSFLLWYFVIVFVLMFF) threads the bilayer. 3 disordered regions span residues 65-114 (DKKD…PVTN), 126-191 (QRRA…LGSY), and 210-244 (LAHH…FSKF). A compositionally biased stretch (basic and acidic residues) spans 80-94 (ASKETSCKRQSKDSA). 2 stretches are compositionally biased toward polar residues: residues 96-114 (DPSQ…PVTN) and 132-142 (QSQFNEVNQNQ). Over residues 161-176 (SWKESESEHHPSPDSI) the composition is skewed to basic and acidic residues.

The protein localises to the membrane. This Homo sapiens (Human) protein is Serine-rich single-pass membrane protein 1 (SSMEM1).